The primary structure comprises 480 residues: Sulfate adenylyltransferase subunit 1 (480 aa).

A tr-type G domain is found at 30–248; that stretch reads KGLLRFLTCG…TVDVKKEASK (219 aa). The interval 39–46 is G1; it reads GSVDDGKS. 39–46 is a GTP binding site; that stretch reads GSVDDGKS. Positions 97–101 are G2; it reads GITID. The interval 118–121 is G3; the sequence is DTPG. GTP is bound by residues 118-122 and 173-176; these read DTPGH and NKMD. Residues 173–176 form a G4 region; sequence NKMD. The tract at residues 211–213 is G5; that stretch reads SAL.

Belongs to the TRAFAC class translation factor GTPase superfamily. Classic translation factor GTPase family. CysN/NodQ subfamily. In terms of assembly, heterodimer composed of CysD, the smaller subunit, and CysN.

The catalysed reaction is sulfate + ATP + H(+) = adenosine 5'-phosphosulfate + diphosphate. Its pathway is sulfur metabolism; hydrogen sulfide biosynthesis; sulfite from sulfate: step 1/3. With CysD forms the ATP sulfurylase (ATPS) that catalyzes the adenylation of sulfate producing adenosine 5'-phosphosulfate (APS) and diphosphate, the first enzymatic step in sulfur assimilation pathway. APS synthesis involves the formation of a high-energy phosphoric-sulfuric acid anhydride bond driven by GTP hydrolysis by CysN coupled to ATP hydrolysis by CysD. In Photorhabdus laumondii subsp. laumondii (strain DSM 15139 / CIP 105565 / TT01) (Photorhabdus luminescens subsp. laumondii), this protein is Sulfate adenylyltransferase subunit 1.